The following is a 117-amino-acid chain: Large ribosomal subunit protein bL20 (117 aa).

This sequence belongs to the bacterial ribosomal protein bL20 family.

Binds directly to 23S ribosomal RNA and is necessary for the in vitro assembly process of the 50S ribosomal subunit. It is not involved in the protein synthesizing functions of that subunit. This is Large ribosomal subunit protein bL20 from Pelobacter propionicus (strain DSM 2379 / NBRC 103807 / OttBd1).